A 123-amino-acid chain; its full sequence is Small ribosomal subunit protein uS13 (123 aa).

The tract at residues 97-123 (PCRGQRTHTNSRTRKGPRRGVMAKKKK) is disordered.

This sequence belongs to the universal ribosomal protein uS13 family. In terms of assembly, part of the 30S ribosomal subunit. Forms a loose heterodimer with protein S19. Forms two bridges to the 50S subunit in the 70S ribosome.

Its function is as follows. Located at the top of the head of the 30S subunit, it contacts several helices of the 16S rRNA. In the 70S ribosome it contacts the 23S rRNA (bridge B1a) and protein L5 of the 50S subunit (bridge B1b), connecting the 2 subunits; these bridges are implicated in subunit movement. Contacts the tRNAs in the A and P-sites. This Solidesulfovibrio magneticus (strain ATCC 700980 / DSM 13731 / RS-1) (Desulfovibrio magneticus) protein is Small ribosomal subunit protein uS13.